Here is a 44-residue protein sequence, read N- to C-terminus: Large ribosomal subunit protein bL34 (44 aa).

Residues 1–26 (MQRTLGGTNRKRKRTSGFRARMRTPD) are disordered. A compositionally biased stretch (basic residues) spans 9–22 (NRKRKRTSGFRARM).

This sequence belongs to the bacterial ribosomal protein bL34 family.

The polypeptide is Large ribosomal subunit protein bL34 (Trichormus variabilis (strain ATCC 29413 / PCC 7937) (Anabaena variabilis)).